We begin with the raw amino-acid sequence, 416 residues long: MEERPAETNANVDNSASPSVAQLAGRFREQAAAAKETPASKPTRRKPPCSLPLFPPKVDLGQNGEEKSPPNASHPPKFKVKSSPLIEKLQANLTFDPAALLPGASPKSPGLKAMVSPFHSPPSTPSSPGVRSRPSEAEEVPVSFDQPPEGSHLPCYNKVRTRGSIKRRPPSRRFRRSQSDCGELGDFRAVESSQQNGAKEEDGDEVLPSKSKAPGSPLSSEGAAGEGVRTLGPAEKPPLRRSPSRTEKQEEDRATEEAKNGEKARRSSEEVDGQHPAQEEVPESPQTSGPEAENRCGSPREEKPAGEEAEMEKATEVKGERVQNEEVGPEHDSQETKKLEEGAAVKETPHSPPGGVKGGDVPKQEKGKEKQQEGAVLEPGCSPQTGPAQLETSSEVQSEPAVPKPEDDTPVQDTKM.

Disordered stretches follow at residues 1–84 and 98–416; these read MEER…KSSP and AALL…DTKM. A compositionally biased stretch (polar residues) spans 8-20; that stretch reads TNANVDNSASPSV. Ser-17 is modified (phosphoserine). Ser-68 is modified (phosphoserine; by MAPK8; in vitro). At Ser-82 the chain carries Phosphoserine. Ser-83 is subject to Phosphoserine; by MAPK8; in vitro. Ser-105 is subject to Phosphoserine. Position 108 is a phosphoserine; by MAPK12 and MAPK13 (Ser-108). Phosphoserine is present on residues Ser-116, Ser-120, and Ser-123. A Phosphothreonine modification is found at Thr-124. 4 positions are modified to phosphoserine: Ser-126, Ser-127, Ser-135, and Ser-143. Residues 159–176 show a composition bias toward basic residues; the sequence is VRTRGSIKRRPPSRRFRR. Ser-177 carries the phosphoserine modification. Ser-179 bears the Phosphoserine; by MAPKAPK2 and MAPKAPK3 mark. Position 216 is a phosphoserine; by MAPK8; in vitro (Ser-216). In terms of domain architecture, RCSD spans 227–330; it reads GVRTLGPAEK…RVQNEEVGPE (104 aa). Ser-244 is subject to Phosphoserine; by MAPKAPK2 or MAPKAPK3; in vitro. Residues 244–273 show a composition bias toward basic and acidic residues; it reads SRTEKQEEDRATEEAKNGEKARRSSEEVDG. Residues Ser-267, Ser-268, Ser-284, Ser-298, and Ser-333 each carry the phosphoserine modification. Residues 292–349 show a composition bias toward basic and acidic residues; sequence AENRCGSPREEKPAGEEAEMEKATEVKGERVQNEEVGPEHDSQETKKLEEGAAVKETP. Thr-336 is subject to Phosphothreonine. Position 351 is a phosphoserine (Ser-351). A compositionally biased stretch (basic and acidic residues) spans 360–372; it reads DVPKQEKGKEKQQ. Over residues 382-397 the composition is skewed to polar residues; the sequence is SPQTGPAQLETSSEVQ.

In terms of assembly, interacts with CAPZA2 and CAPZB. Dephosphorylation results in its dissociation from CAPZA2. As to expression, highly expressed in skeletal muscle and more weakly in cardiac muscle. Also expressed in several lymphoid organs, including spleen, thymus, peripheral blood leukocytes, lymph node and bone marrow.

Its function is as follows. Stress-induced phosphorylation of CAPZIP may regulate the ability of F-actin-capping protein to remodel actin filament assembly. This is CapZ-interacting protein (RCSD1) from Homo sapiens (Human).